The primary structure comprises 955 residues: Anoctamin-4 (955 aa).

At 1-352 the chain is on the cytoplasmic side; that stretch reads MEASSSGITN…FGEKIGLYFA (352 aa). The disordered stretch occupies residues 73-97; that stretch reads KDDDSLLHPGNLTSTSEDTSRLEAG. A helical transmembrane segment spans residues 353–373; sequence WLGWYTGMLFPAAFIGLFVFL. The Extracellular segment spans residues 374–424; that stretch reads YGVTTLDHCQVSKEVCQATDIIMCPVCDKYCPFMRLSDSCVYAKVTHLFDN. A helical transmembrane segment spans residues 425–445; that stretch reads GATVFFAVFMAVWATVFLEFW. Residues 446–505 are Cytoplasmic-facing; sequence KRRRAVIAYDWDLIDWEEEEEEIRPQFEAKYSKKERMNPISGKPEPYQAFTDKCSRLIVS. Residues 506–526 form a helical membrane-spanning segment; sequence ASGIFFMICVVIAAVFGIVIY. Residues 527-547 are Extracellular-facing; that stretch reads RVVTVSTFAAFKWALIRNNSQ. Residue asparagine 544 is glycosylated (N-linked (GlcNAc...) asparagine). The chain crosses the membrane as a helical span at residues 548 to 568; the sequence is VATTGTAVCINFCIIMLLNVL. Over 569–595 the chain is Cytoplasmic; that stretch reads YEKVALLLTNLEQPRTESEWENSFTLK. A helical transmembrane segment spans residues 596–616; it reads MFLFQFVNLNSSTFYIAFFLG. Residues 617-715 are Extracellular-facing; the sequence is RFTGHPGAYL…AYGLFDEYLE (99 aa). The chain crosses the membrane as a helical span at residues 716 to 736; that stretch reads MILQFGFTTIFVAAFPLAPLL. Residues 737-768 are Cytoplasmic-facing; the sequence is ALLNNIIEIRLDAYKFVTQWRRPLASRAKDIG. Residues 769–789 form a helical membrane-spanning segment; it reads IWYGILEGIGILSVITNAFVI. Topologically, residues 790 to 885 are extracellular; that stretch reads AITSDFIPRL…QFWHVLAARL (96 aa). N-linked (GlcNAc...) asparagine glycosylation is found at asparagine 824 and asparagine 837. The chain crosses the membrane as a helical span at residues 886–906; it reads AFIIVFEHLVFCIKHLISYLI. At 907–955 the chain is on the cytoplasmic side; that stretch reads PDLPKDLRDRMRREKYLIQEMMYEAELERLQKERKERKKNGKAHHNEWP.

The protein belongs to the anoctamin family. In terms of tissue distribution, predominantly expressed in neuronal tissues. Expressed at low levels in ovary, uterus, heart and brain.

The protein localises to the cell membrane. The catalysed reaction is a 1,2-diacyl-sn-glycero-3-phospho-L-serine(in) = a 1,2-diacyl-sn-glycero-3-phospho-L-serine(out). It carries out the reaction a beta-D-galactosyl-(1&lt;-&gt;1')-N-acylsphing-4-enine(out) = a beta-D-galactosyl-(1&lt;-&gt;1')-N-acylsphing-4-enine(in). The enzyme catalyses a 1,2-diacyl-sn-glycero-3-phosphocholine(in) = a 1,2-diacyl-sn-glycero-3-phosphocholine(out). Functionally, has calcium-dependent phospholipid scramblase activity; scrambles phosphatidylserine, phosphatidylcholine and galactosylceramide. Does not exhibit calcium-activated chloride channel (CaCC) activity. This is Anoctamin-4 from Mus musculus (Mouse).